The following is a 192-amino-acid chain: E3 ubiquitin-protein ligase RNF185 (192 aa).

Residues 1–27 (MASKGPSASASPENSSAGGPSGSSNGA) show a composition bias toward low complexity. Residues 1 to 30 (MASKGPSASASPENSSAGGPSGSSNGAGES) are disordered. At 1 to 130 (MASKGPSASA…GGFQGFGFGD (130 aa)) the chain is on the cytoplasmic side. Positions 29–80 (ESGGQDSTFECNICLDTAKDAVISLCGHLFCWPCLHQWLETRPNRQVCPVCK) are required for ubiquitin ligase activity and protection against ER stress-induced cell death. The RING-type zinc finger occupies 39 to 80 (CNICLDTAKDAVISLCGHLFCWPCLHQWLETRPNRQVCPVCK). Positions 90 to 123 (PLYGRGSTGQQDPREKTPPRPQGQRPEPENRGGF) are disordered. The chain crosses the membrane as a helical span at residues 131-151 (GGFQMSFGIGAFPFGIFATAF). Over 152–171 (NINDGRPPPAVPGTPQYVDE) the chain is Mitochondrial intermembrane. Residues 172 to 192 (QFLSRLFLFVALVIMFWLLIA) form a helical membrane-spanning segment.

Interacts with ATG5 and BNIP1. In terms of tissue distribution, ubiquitously expressed.

It localises to the mitochondrion outer membrane. The protein localises to the endoplasmic reticulum membrane. It carries out the reaction S-ubiquitinyl-[E2 ubiquitin-conjugating enzyme]-L-cysteine + [acceptor protein]-L-lysine = [E2 ubiquitin-conjugating enzyme]-L-cysteine + N(6)-ubiquitinyl-[acceptor protein]-L-lysine.. Its pathway is protein modification; protein ubiquitination. Functionally, E3 ubiquitin-protein ligase that regulates selective mitochondrial autophagy by mediating 'Lys-63'-linked polyubiquitination of BNIP1. Acts in the endoplasmic reticulum (ER)-associated degradation (ERAD) pathway, which targets misfolded proteins that accumulate in the endoplasmic reticulum (ER) for ubiquitination and subsequent proteasome-mediated degradation. Protects cells from ER stress-induced apoptosis. Responsible for the cotranslational ubiquitination and degradation of CFTR in the ERAD pathway. Also acts as a regulator of the innate antiviral response by catalyzing 'Lys-27'-linked polyubiquitination of CGAS at 'Lys-173' and 'Lys-384', thereby promoting CGAS cyclic GMP-AMP synthase activity. Preferentially associates with the E2 enzymes UBE2J1 and UBE2J2. In Homo sapiens (Human), this protein is E3 ubiquitin-protein ligase RNF185.